Here is a 1026-residue protein sequence, read N- to C-terminus: Probable DNA-directed RNA polymerase II subunit RPB1 homolog (1026 aa).

The Zn(2+) site is built by Cys-62, Cys-65, Cys-72, His-75, Cys-102, Cys-105, and Cys-142. Mg(2+)-binding residues include Asp-588, Asp-590, and Asp-592.

Belongs to the RNA polymerase beta' chain family.

The enzyme catalyses RNA(n) + a ribonucleoside 5'-triphosphate = RNA(n+1) + diphosphate. Component of the DNA-dependent RNA polymerase that catalyzes the transcription of DNA into RNA using the four ribonucleoside triphosphates as substrates. Largest and catalytic component of RNA polymerase II which synthesizes mRNA precursors and many functional non-coding RNAs. Forms the polymerase active center together with the second largest subunit. The chain is Probable DNA-directed RNA polymerase II subunit RPB1 homolog from Acheta domesticus (House cricket).